Consider the following 180-residue polypeptide: Large ribosomal subunit protein uL6 (180 aa).

The protein belongs to the universal ribosomal protein uL6 family. In terms of assembly, part of the 50S ribosomal subunit.

In terms of biological role, this protein binds to the 23S rRNA, and is important in its secondary structure. It is located near the subunit interface in the base of the L7/L12 stalk, and near the tRNA binding site of the peptidyltransferase center. The chain is Large ribosomal subunit protein uL6 from Borrelia turicatae (strain 91E135).